A 328-amino-acid polypeptide reads, in one-letter code: DNA-directed RNA polymerase subunit alpha (328 aa).

Residues M1 to Q234 form an alpha N-terminal domain (alpha-NTD) region. An alpha C-terminal domain (alpha-CTD) region spans residues I248–P328.

It belongs to the RNA polymerase alpha chain family. As to quaternary structure, homodimer. The RNAP catalytic core consists of 2 alpha, 1 beta, 1 beta' and 1 omega subunit. When a sigma factor is associated with the core the holoenzyme is formed, which can initiate transcription.

It catalyses the reaction RNA(n) + a ribonucleoside 5'-triphosphate = RNA(n+1) + diphosphate. Functionally, DNA-dependent RNA polymerase catalyzes the transcription of DNA into RNA using the four ribonucleoside triphosphates as substrates. In Neisseria meningitidis serogroup A / serotype 4A (strain DSM 15465 / Z2491), this protein is DNA-directed RNA polymerase subunit alpha.